A 436-amino-acid chain; its full sequence is Tol-Pal system protein TolB (436 aa).

The N-terminal stretch at 1–28 is a signal peptide; it reads MEMLRRNFFRLLMVLVAGCGLIASPANA.

This sequence belongs to the TolB family. In terms of assembly, the Tol-Pal system is composed of five core proteins: the inner membrane proteins TolA, TolQ and TolR, the periplasmic protein TolB and the outer membrane protein Pal. They form a network linking the inner and outer membranes and the peptidoglycan layer.

It localises to the periplasm. In terms of biological role, part of the Tol-Pal system, which plays a role in outer membrane invagination during cell division and is important for maintaining outer membrane integrity. The sequence is that of Tol-Pal system protein TolB from Rhizobium meliloti (strain 1021) (Ensifer meliloti).